Consider the following 222-residue polypeptide: Charged multivesicular body protein 2a (222 aa).

Methionine 1 carries the N-acetylmethionine modification. Residues 12–53 (EELLRQNQRALNRAMRELDRERQKLETQEKKIIADIKKMAKQ) adopt a coiled-coil conformation. Positions 56-222 (MDAVRIMAKD…EERLKNLRRD (167 aa)) are interaction with VPS4B. Residues 179-188 (LSNLPSTGGS) are compositionally biased toward polar residues. Residues 179–198 (LSNLPSTGGSLSVAAGGKKA) form a disordered region. At serine 184 the chain carries Phosphoserine. A Phosphothreonine modification is found at threonine 185. 3 positions are modified to phosphoserine: serine 188, serine 190, and serine 203. Residues 195 to 222 (GKKAEATASALADADADLEERLKNLRRD) adopt a coiled-coil conformation. The MIT-interacting motif motif lies at 210 to 220 (ADLEERLKNLR). The segment at 217-222 (KNLRRD) is interaction with VTA1.

Belongs to the SNF7 family. Probable core component of the endosomal sorting required for transport complex III (ESCRT-III). ESCRT-III components are thought to multimerize to form a flat lattice on the perimeter membrane of the endosome. Several assembly forms of ESCRT-III may exist that interact and act sequentially. In vitro, heteromerizes with CHMP3 (but not CHMP4) to form helical tubular structures that expose membrane-interacting sites on the outside whereas VPS4B can associate on the inside of the tubule. Interacts with CHMP1B, CHMP2B, CHMP3, CHMP4A, CHMP4B, CHMP4C and CHMP5. Interacts with VPS4A; the interaction is direct. Interacts with VPS4B; the interaction is direct. Interacts with MITD1. Interacts with VTA1; the interaction probably involves the open conformation of CHMP2A. Post-translationally, ISGylated in a CHMP5-dependent manner. Isgylation weakens and inhibits its interactions with VPS4A and VTA1 respectively. As to expression, widely expressed. Highly expressed in brain, heart, liver and kidney.

It is found in the late endosome membrane. Its subcellular location is the cytoplasm. The protein localises to the nucleus envelope. Probable core component of the endosomal sorting required for transport complex III (ESCRT-III) which is involved in multivesicular bodies (MVBs) formation and sorting of endosomal cargo proteins into MVBs. MVBs contain intraluminal vesicles (ILVs) that are generated by invagination and scission from the limiting membrane of the endosome and mostly are delivered to lysosomes enabling degradation of membrane proteins, such as stimulated growth factor receptors, lysosomal enzymes and lipids. The MVB pathway appears to require the sequential function of ESCRT-O, -I,-II and -III complexes. ESCRT-III proteins mostly dissociate from the invaginating membrane before the ILV is released. The ESCRT machinery also functions in topologically equivalent membrane fission events, such as the terminal stages of cytokinesis. Together with SPAST, the ESCRT-III complex promotes nuclear envelope sealing and mitotic spindle disassembly during late anaphase. Recruited to the reforming nuclear envelope (NE) during anaphase by LEMD2. ESCRT-III proteins are believed to mediate the necessary vesicle extrusion and/or membrane fission activities, possibly in conjunction with the AAA ATPase VPS4. The polypeptide is Charged multivesicular body protein 2a (Chmp2a) (Mus musculus (Mouse)).